The following is a 546-amino-acid chain: Cysteine desulfurase SufS (546 aa).

The signal sequence occupies residues 1-22; the sequence is MLRGPRCLYIYLFFVFLPFSFC. At Lys291 the chain carries N6-(pyridoxal phosphate)lysine. Cys497 (cysteine persulfide intermediate) is an active-site residue.

This sequence belongs to the class-V pyridoxal-phosphate-dependent aminotransferase family. Csd subfamily. As to quaternary structure, monomer. Interacts with SufE; interaction enhances cysteine desulfurase activity of SufS. The cofactor is pyridoxal 5'-phosphate. In terms of processing, proteolytically cleaved.

It localises to the plastid. The protein localises to the apicoplast. It carries out the reaction (sulfur carrier)-H + L-cysteine = (sulfur carrier)-SH + L-alanine. It functions in the pathway cofactor biosynthesis; iron-sulfur cluster biosynthesis. Functionally, catalyzes sulfur activation and mobilization in sulfur mobilization (SUF) pathway for iron-sulfur (Fe-S) cluster biogenesis. Active when in complex with a partner protein SufE. Required for apicoplast maintenance. Plays a role in the development of sporozoites in oocysts in mosquitoes. May provide sulfur for MNMA-mediated tRNA modifications. The polypeptide is Cysteine desulfurase SufS (Plasmodium falciparum (isolate 3D7)).